The chain runs to 202 residues: MKARELDVPGAWEITPTIHVDSRGLFFEWLTDHGFRAFAGHSLDVRQVNCSVSSAGVLRGLHFAQLPPSQAKYVTCVSGSVFDVVVDIREGSPTFGRWDSVLLDDQDRRTIYVSEGLAHGFLALQDNSTVMYLCSAEYNPQREHTICATDPTLAVDWPLVDGAAPSLSDRDAAAPSFEDVRASGLLPRWEQTQRFIGEMRGT.

Substrate-binding positions include arginine 23, glutamate 28, 47–49, and arginine 59; that span reads QVN. The Proton acceptor role is filled by histidine 62. Positions 72 and 119 each coordinate substrate. Tyrosine 132 (proton donor) is an active-site residue. Residues glutamate 143 and arginine 170 each contribute to the substrate site.

The protein belongs to the dTDP-4-dehydrorhamnose 3,5-epimerase family. As to quaternary structure, homodimer.

The catalysed reaction is dTDP-4-dehydro-6-deoxy-alpha-D-glucose = dTDP-4-dehydro-beta-L-rhamnose. The protein operates within carbohydrate biosynthesis; dTDP-L-rhamnose biosynthesis. Catalyzes the epimerization of the C3' and C5'positions of dTDP-6-deoxy-D-xylo-4-hexulose, forming dTDP-6-deoxy-L-lyxo-4-hexulose. Involved in the biosynthesis of the dTDP-L-rhamnose which is a component of the critical linker, D-N-acetylglucosamine-L-rhamnose disaccharide, which connects the galactan region of arabinogalactan to peptidoglycan via a phosphodiester linkage. The chain is dTDP-4-dehydrorhamnose 3,5-epimerase (rmlC) from Mycobacterium tuberculosis (strain CDC 1551 / Oshkosh).